A 305-amino-acid chain; its full sequence is RNA-binding protein rnp-1 (305 aa).

The region spanning 3 to 72 (SKLFVGNLPD…KVVNIKKSTS (70 aa)) is the RRM domain. Residues 84 to 97 (CFRCQSDEHRTPQC) form a CCHC-type zinc finger. A disordered region spans residues 284-305 (QQIQHQQATGSPAPVPAPPRLY). A compositionally biased stretch (pro residues) spans 296 to 305 (APVPAPPRLY).

In terms of tissue distribution, expressed throughout the germline.

Functionally, RNA-binding protein that is required for the germ line to transition from spermatogenesis to oogenesis and allow for normal oocyte development. The chain is RNA-binding protein rnp-1 from Caenorhabditis elegans.